A 520-amino-acid polypeptide reads, in one-letter code: MHSTNQSSRLFQYPCKSTSTQYPIFIFPKFSSRKFVKSLRTSIDYKQEGASKEDLVVPSNVARRLPIIIKKSGKVSRYFIKGDSLELLCVDEEEDDSTSFCLGLDDGFWKLIRLTSSAAKDFFLPKQVSDNYISYVKWKFLHRVFSSALQVLATQAMFRAIGIGQSRSLASSAAFNWILKDGLGRLSRCIYTASLASAFDTNLKRVRFSTSVLFSLSIGVELMTPVFPQYFLLLASIANIAKQISLSCYLATGSAVHRSFAVADNLGEVSAKAQIQTVCFDNLGLLLAVLLNMLFQHNQRLQACLPFVLYPIFSTFDLLGIYQGLKHINLQTLTKDRLEIILERWIEFRQVPSPAEVSEEEGIGLLGSRGSKRVWPIRIGCLDPKAQIPTLSMMAMQSLCSDDGYFITMELSSQGFRRIPKSGIVICLREGANSVDVITSLLQTCYIRKSLGANRTKRSYLSFSDLTLQDWTLLTRESKRAARDDNIALNKQMQEQGWIVKNVLLSAEEQIRYIFDKNQL.

The next 2 helical transmembrane spans lie at I275–F295 and L301–I321.

Belongs to the RUS1 family.

Its subcellular location is the membrane. This chain is Protein root UVB sensitive 4, found in Arabidopsis thaliana (Mouse-ear cress).